The primary structure comprises 47 residues: Defensin-like protein 1 (47 aa).

4 cysteine pairs are disulfide-bonded: Cys-3-Cys-47, Cys-14-Cys-34, Cys-20-Cys-41, and Cys-24-Cys-43.

Monomer and homodimer.

Functionally, inhibits trypsin but not chymotrypsin. The chain is Defensin-like protein 1 from Vigna unguiculata (Cowpea).